We begin with the raw amino-acid sequence, 240 residues long: Fatty acid metabolism regulator protein (240 aa).

An HTH gntR-type domain is found at 6-74; sequence KGPASFAEKY…HGKPTRVNNF (69 aa). Positions 34-53 form a DNA-binding region, H-T-H motif; that stretch reads ERELSELIGVTRTTLREVLQ.

In terms of assembly, homodimer.

It localises to the cytoplasm. Multifunctional regulator of fatty acid metabolism. The sequence is that of Fatty acid metabolism regulator protein from Shewanella amazonensis (strain ATCC BAA-1098 / SB2B).